The chain runs to 1342 residues: DNA-directed RNA polymerase subunit beta (1342 aa).

It belongs to the RNA polymerase beta chain family. In terms of assembly, the RNAP catalytic core consists of 2 alpha, 1 beta, 1 beta' and 1 omega subunit. When a sigma factor is associated with the core the holoenzyme is formed, which can initiate transcription.

It carries out the reaction RNA(n) + a ribonucleoside 5'-triphosphate = RNA(n+1) + diphosphate. In terms of biological role, DNA-dependent RNA polymerase catalyzes the transcription of DNA into RNA using the four ribonucleoside triphosphates as substrates. This is DNA-directed RNA polymerase subunit beta from Yersinia pestis bv. Antiqua (strain Angola).